Consider the following 129-residue polypeptide: Large ribosomal subunit protein bL12c (129 aa).

The protein belongs to the bacterial ribosomal protein bL12 family. Homodimer. Part of the ribosomal stalk of the 50S ribosomal subunit. Forms a multimeric L10(L12)X complex, where L10 forms an elongated spine to which 2 to 4 L12 dimers bind in a sequential fashion. Binds GTP-bound translation factors.

It localises to the plastid. The protein localises to the chloroplast. Forms part of the ribosomal stalk which helps the ribosome interact with GTP-bound translation factors. Is thus essential for accurate translation. The sequence is that of Large ribosomal subunit protein bL12c from Tupiella akineta (Green alga).